A 5193-amino-acid polypeptide reads, in one-letter code: Usherin (5193 aa).

A signal peptide spans 1-34 (MHYLALSPGFLCYTIKTLILAYLASVLVLAASQG). Over 35–5033 (VFPRLENVGA…KSTEFYSELW (4999 aa)) the chain is Extracellular. N-linked (GlcNAc...) asparagine glycosylation is found at Asn230, Asn258, Asn274, Asn358, Asn415, Asn448, and Asn469. The region spanning 268–514 (QDFRLYNVSL…AVDEIIVSGR (247 aa)) is the Laminin N-terminal domain. 24 cysteine pairs are disulfide-bonded: Cys515/Cys524, Cys517/Cys533, Cys535/Cys546, Cys549/Cys569, Cys572/Cys581, Cys574/Cys602, Cys605/Cys614, Cys617/Cys635, Cys638/Cys652, Cys640/Cys659, Cys661/Cys670, Cys673/Cys688, Cys691/Cys705, Cys693/Cys712, Cys714/Cys723, Cys726/Cys741, Cys744/Cys756, Cys746/Cys763, Cys765/Cys774, Cys777/Cys789, Cys792/Cys805, Cys794/Cys812, Cys814/Cys823, and Cys826/Cys846. Laminin EGF-like domains are found at residues 515-571 (CQCH…NCKP), 572-637 (CQCH…ACKL), 638-690 (CDCN…GCRP), 691-743 (CNCN…GCEP), 744-791 (CQCN…ACEV), 792-848 (CDCS…NCEK), 853-896 (NGSL…GCQA), 897-947 (CDCD…GCLP), 948-998 (CLCH…RCRP), and 999-1049 (CHCH…GCSK). Residue Asn647 is glycosylated (N-linked (GlcNAc...) asparagine). Residues Asn836 and Asn853 are each glycosylated (N-linked (GlcNAc...) asparagine). Cystine bridges form between Cys867–Cys876, Cys879–Cys894, Cys897–Cys910, Cys899–Cys917, Cys919–Cys928, Cys931–Cys945, Cys948–Cys960, Cys950–Cys967, Cys969–Cys979, Cys982–Cys996, Cys999–Cys1011, Cys1001–Cys1018, Cys1020–Cys1029, and Cys1032–Cys1047. Asn885 carries N-linked (GlcNAc...) asparagine glycosylation. Asn941 is a glycosylation site (N-linked (GlcNAc...) asparagine). Residue Asn1008 is glycosylated (N-linked (GlcNAc...) asparagine). Fibronectin type-III domains are found at residues 1055–1143 (PPPR…TKPE), 1147–1241 (GHLN…APPQ), 1242–1357 (TQGP…SVPV), 1358–1462 (FMAP…AAPA), and 1463–1566 (QLRP…LQLK). 5 N-linked (GlcNAc...) asparagine glycosylation sites follow: Asn1068, Asn1089, Asn1150, Asn1171, and Asn1222. N-linked (GlcNAc...) asparagine glycans are attached at residues Asn1382, Asn1473, and Asn1626. 2 consecutive Laminin G-like domains span residues 1511–1700 (TKGT…WEGC) and 1705–1882 (EEGV…QDGC). Cys1663 and Cys1700 are oxidised to a cystine. Asn1770 carries N-linked (GlcNAc...) asparagine glycosylation. 13 Fibronectin type-III domains span residues 1847 to 1946 (EPGF…TAPQ), 1948 to 2045 (VPTP…TPQE), 2046 to 2132 (APQE…TAQL), 2133 to 2234 (PPEQ…IPEG), 2235 to 2321 (VPAP…APPE), 2322 to 2421 (GVVN…SVEM), 2422 to 2525 (PPGA…DKPG), 2526 to 2613 (PIDA…TLPG), 2617 to 2713 (GIPS…TRPC), 2717 to 2810 (GVQP…THPA), 2811 to 2914 (PPQE…TLAG), 2918 to 3009 (RGAT…MWEE), and 3013 to 3103 (GMLP…TPSD). Cys1853 and Cys1882 are joined by a disulfide. N-linked (GlcNAc...) asparagine glycosylation is present at Asn1894. A disordered region spans residues 1931-1955 (VSSDWSRGRTLGTAPQSVPTPSRAQ). The span at 1943-1955 (TAPQSVPTPSRAQ) shows a compositional bias: polar residues. Residues Asn1958, Asn2095, Asn2121, Asn2177, Asn2186, Asn2249, Asn2276, Asn2313, Asn2368, and Asn2404 are each glycosylated (N-linked (GlcNAc...) asparagine). N-linked (GlcNAc...) asparagine glycosylation is found at Asn2575, Asn2647, Asn2701, Asn2761, and Asn2779. N-linked (GlcNAc...) asparagine glycans are attached at residues Asn2928, Asn2998, Asn3023, Asn3090, Asn3208, Asn3322, and Asn3411. Fibronectin type-III domains follow at residues 3395-3489 (CPAT…TRED), 3490-3580 (VPEG…TTQR), 3581-3671 (SPEN…TLQA), 3672-3766 (APQG…TPED), 3769-3857 (PPCN…TLEA), 3858-3955 (APVG…TLEA), 3956-4059 (PPRG…SAPS), 4060-4148 (GLMN…APPD), 4149-4256 (TQMA…APPD), 4257-4346 (GLSP…TPEV), 4347-4437 (PPSE…APPE), 4438-4522 (NMDP…TSPS), 4523-4625 (APSG…VPPL), 4628-4725 (PAPH…TGPA), 4726-4818 (PPEG…THPA), 4819-4921 (PPSG…TKKE), and 4922-5005 (MPQY…YDAA). N-linked (GlcNAc...) asparagine glycosylation is found at Asn3589, Asn3645, Asn3686, Asn3712, Asn3723, and Asn3772. 8 N-linked (GlcNAc...) asparagine glycosylation sites follow: Asn3976, Asn4063, Asn4194, Asn4218, Asn4304, Asn4340, Asn4365, and Asn4410. Residues Asn4556, Asn4575, Asn4683, Asn4716, Asn4746, Asn4756, Asn4765, Asn4915, and Asn4934 are each glycosylated (N-linked (GlcNAc...) asparagine). The helical transmembrane segment at 5034–5054 (FIMVMAVVGLILLAIFLSLIL) threads the bilayer. Residues 5055–5193 (QRKIHKEPCI…EHTAFTDTHL (139 aa)) lie on the Cytoplasmic side of the membrane. A PDZ-binding motif is present at residues 5191-5193 (THL).

As to quaternary structure, interacts with collagen IV and fibronectin via its laminin EGF-like domains. Interaction with collagen may be required for stable integration into the basement membrane. Interacts with NINL. Interacts with USH1C. Component of USH2 complex, composed of ADGRV1, PDZD7, USH2A and WHRN. Interacts with ADGRV1/MASS1 (via N-terminal PDZ domain). Interacts (via the cytoplasmic region) with WHRN. Interacts (via the cytoplasmic region) with PDZD7. Interacts (via the cytoplasmic region) with VEZT and MYO7A (via MyTH4-FERM domains); the interaction associates VEZT with the USH2 complex at the stereocilia base. As to expression, present in the testis, epididymis, oviduct, spleen, submaxillary gland, and small and large intestines. Not detected in the brain, skin, lung, skeletal muscle, cardiac muscle, liver or kidney. Expressed in smooth muscle of the colon and the epididymis. Also present in select vascular basement membranes. In the cochlea, it is present in virtually every basement membrane. It is particularly high in the strial capillary basement membranes (SCBMs). In the retina, it is again expressed in all of the basement membranes. It is also very prevalent in the lens capsule and the Bruch's layer between the retinal pigment epithelium and the choroid layer, which is very rich in basement membranes. In neonates in it is widely expressed in the basement membranes of the cochlea. Present in the synaptic terminals of retinal photoreceptors (at protein level).

Its subcellular location is the cell projection. The protein localises to the stereocilium membrane. The protein resides in the photoreceptor inner segment. It is found in the secreted. Functionally, involved in hearing and vision as member of the USH2 complex. In the inner ear, required for the maintenance of hair bundle ankle formation, which connects growing stereocilia in developing cochlear hair cells. In retina photoreceptors, the USH2 complex is required for the maintenance of periciliary membrane complex that seems to play a role in regulating intracellular protein transport. In Mus musculus (Mouse), this protein is Usherin (Ush2A).